The chain runs to 281 residues: Pantothenate synthetase (281 aa).

Methionine 30–histidine 37 serves as a coordination point for ATP. Histidine 37 functions as the Proton donor in the catalytic mechanism. Glutamine 61 lines the (R)-pantoate pocket. Residue glutamine 61 coordinates beta-alanine. Glycine 149–aspartate 152 contributes to the ATP binding site. Glutamine 155 provides a ligand contact to (R)-pantoate. Residues isoleucine 178 and methionine 186–arginine 189 each bind ATP.

It belongs to the pantothenate synthetase family. As to quaternary structure, homodimer.

It is found in the cytoplasm. The enzyme catalyses (R)-pantoate + beta-alanine + ATP = (R)-pantothenate + AMP + diphosphate + H(+). It participates in cofactor biosynthesis; (R)-pantothenate biosynthesis; (R)-pantothenate from (R)-pantoate and beta-alanine: step 1/1. Its function is as follows. Catalyzes the condensation of pantoate with beta-alanine in an ATP-dependent reaction via a pantoyl-adenylate intermediate. This chain is Pantothenate synthetase, found in Shewanella baltica (strain OS155 / ATCC BAA-1091).